The following is a 239-amino-acid chain: 6-phosphogluconolactonase (239 aa).

This sequence belongs to the glucosamine/galactosamine-6-phosphate isomerase family. 6-phosphogluconolactonase subfamily.

It carries out the reaction 6-phospho-D-glucono-1,5-lactone + H2O = 6-phospho-D-gluconate + H(+). It participates in carbohydrate degradation; pentose phosphate pathway; D-ribulose 5-phosphate from D-glucose 6-phosphate (oxidative stage): step 2/3. Hydrolysis of 6-phosphogluconolactone to 6-phosphogluconate. This chain is 6-phosphogluconolactonase (pgl), found in Xylella fastidiosa (strain 9a5c).